The following is a 374-amino-acid chain: Probable plastid-lipid-associated protein 3, chloroplastic (374 aa).

The transit peptide at 1-46 directs the protein to the chloroplast; the sequence is MAMPPPLFAAASHASLLLPSPTIHSSTGSRRPFRLPLRSSRRPPVA. A disordered region spans residues 19–148; it reads PSPTIHSSTG…EDNEEERREE (130 aa). Residues 28–54 show a composition bias toward low complexity; the sequence is GSRRPFRLPLRSSRRPPVAAAAASGVP. Pro residues-rich tracts occupy residues 64 to 73 and 127 to 136; these read APEPPSQPDP and PAPPPPPPPV.

The protein belongs to the PAP/fibrillin family.

The protein localises to the plastid. The protein resides in the chloroplast. The protein is Probable plastid-lipid-associated protein 3, chloroplastic (PAP3) of Oryza sativa subsp. japonica (Rice).